Here is a 202-residue protein sequence, read N- to C-terminus: Nucleoside triphosphate pyrophosphatase (202 aa).

Residue Asp-79 is the Proton acceptor of the active site.

The protein belongs to the Maf family. It depends on a divalent metal cation as a cofactor.

It is found in the cytoplasm. The catalysed reaction is a ribonucleoside 5'-triphosphate + H2O = a ribonucleoside 5'-phosphate + diphosphate + H(+). It carries out the reaction a 2'-deoxyribonucleoside 5'-triphosphate + H2O = a 2'-deoxyribonucleoside 5'-phosphate + diphosphate + H(+). Its function is as follows. Nucleoside triphosphate pyrophosphatase. May have a dual role in cell division arrest and in preventing the incorporation of modified nucleotides into cellular nucleic acids. The sequence is that of Nucleoside triphosphate pyrophosphatase from Bradyrhizobium diazoefficiens (strain JCM 10833 / BCRC 13528 / IAM 13628 / NBRC 14792 / USDA 110).